The following is a 416-amino-acid chain: Serine--tRNA ligase (416 aa).

232–234 (TAE) lines the L-serine pocket. Position 263–265 (263–265 (RKE)) interacts with ATP. Position 286 (Glu-286) interacts with L-serine. 350 to 353 (EISS) is a binding site for ATP. Residue Ser-384 participates in L-serine binding.

Belongs to the class-II aminoacyl-tRNA synthetase family. Type-1 seryl-tRNA synthetase subfamily. As to quaternary structure, homodimer. The tRNA molecule binds across the dimer.

It is found in the cytoplasm. The enzyme catalyses tRNA(Ser) + L-serine + ATP = L-seryl-tRNA(Ser) + AMP + diphosphate + H(+). It carries out the reaction tRNA(Sec) + L-serine + ATP = L-seryl-tRNA(Sec) + AMP + diphosphate + H(+). It functions in the pathway aminoacyl-tRNA biosynthesis; selenocysteinyl-tRNA(Sec) biosynthesis; L-seryl-tRNA(Sec) from L-serine and tRNA(Sec): step 1/1. Its function is as follows. Catalyzes the attachment of serine to tRNA(Ser). Is also able to aminoacylate tRNA(Sec) with serine, to form the misacylated tRNA L-seryl-tRNA(Sec), which will be further converted into selenocysteinyl-tRNA(Sec). This Nautilia profundicola (strain ATCC BAA-1463 / DSM 18972 / AmH) protein is Serine--tRNA ligase.